The chain runs to 319 residues: Carboxylesterase NlhH (319 aa).

The Involved in the stabilization of the negatively charged intermediate by the formation of the oxyanion hole signature appears at His-88–Gly-90. Residues Ser-162, Asp-260, and His-290 contribute to the active site.

This sequence belongs to the 'GDXG' lipolytic enzyme family. Monomer.

It carries out the reaction a carboxylic ester + H2O = an alcohol + a carboxylate + H(+). In terms of biological role, hydrolyzes various short-chain esters. This Mycobacterium tuberculosis (strain CDC 1551 / Oshkosh) protein is Carboxylesterase NlhH (nlhH).